The chain runs to 300 residues: Tyrosine recombinase XerC (300 aa).

Residues 2 to 88 (TQEGKLEQQF…SLRSFYTFLL (87 aa)) form the Core-binding (CB) domain. The region spanning 109-294 (RLPKFFYSEE…TKEHLKSTYM (186 aa)) is the Tyr recombinase domain. Residues Arg-150, Lys-174, His-246, Arg-249, and His-272 contribute to the active site. Tyr-281 serves as the catalytic O-(3'-phospho-DNA)-tyrosine intermediate.

It belongs to the 'phage' integrase family. XerC subfamily. In terms of assembly, forms a cyclic heterotetrameric complex composed of two molecules of XerC and two molecules of XerD.

The protein localises to the cytoplasm. In terms of biological role, site-specific tyrosine recombinase, which acts by catalyzing the cutting and rejoining of the recombining DNA molecules. The XerC-XerD complex is essential to convert dimers of the bacterial chromosome into monomers to permit their segregation at cell division. It also contributes to the segregational stability of plasmids. The sequence is that of Tyrosine recombinase XerC from Listeria monocytogenes serotype 4a (strain HCC23).